A 140-amino-acid chain; its full sequence is Nucleoside diphosphate kinase (140 aa).

ATP contacts are provided by Lys-11, Phe-59, Arg-87, Thr-93, Arg-104, and Asn-114. Catalysis depends on His-117, which acts as the Pros-phosphohistidine intermediate.

The protein belongs to the NDK family. Homotetramer. Requires Mg(2+) as cofactor.

The protein resides in the cytoplasm. The enzyme catalyses a 2'-deoxyribonucleoside 5'-diphosphate + ATP = a 2'-deoxyribonucleoside 5'-triphosphate + ADP. It catalyses the reaction a ribonucleoside 5'-diphosphate + ATP = a ribonucleoside 5'-triphosphate + ADP. Functionally, major role in the synthesis of nucleoside triphosphates other than ATP. The ATP gamma phosphate is transferred to the NDP beta phosphate via a ping-pong mechanism, using a phosphorylated active-site intermediate. In Francisella tularensis subsp. tularensis (strain SCHU S4 / Schu 4), this protein is Nucleoside diphosphate kinase.